The sequence spans 159 residues: Afifavidin (159 aa).

An N-terminal signal peptide occupies residues 1-23 (MRRLASLAVALPLLAVVASPALA). Residues 36-151 (GVPAVSSSWV…GSDTFTLVNK (116 aa)) enclose the Avidin-like domain. The biotin site is built by Asn-46, Ser-50, Tyr-66, Asn-68, and Gly-74. Residues Cys-75 and Cys-104 are joined by a disulfide bond. 3 residues coordinate biotin: Ser-106, Thr-108, and Asp-144.

Belongs to the avidin/streptavidin family. Exhibits a dynamic oligomeric assembly: the apo form self-assembles mostly into toroid-shaped homooctamers, with a small fraction of homodimers, yet upon biotin binding the intact afifavidin consists solely of the dimer.

The protein localises to the secreted. In terms of biological role, the exact role played by afifavidin is still obscure. Forms a strong non-covalent complex with biotin and 2-iminobiotin. This Afifella pfennigii (Rhodobium pfennigii) protein is Afifavidin.